The chain runs to 185 residues: GTP cyclohydrolase 1 (185 aa).

Positions 75, 78, and 146 each coordinate Zn(2+).

It belongs to the GTP cyclohydrolase I family. As to quaternary structure, toroid-shaped homodecamer, composed of two pentamers of five dimers.

It catalyses the reaction GTP + H2O = 7,8-dihydroneopterin 3'-triphosphate + formate + H(+). The protein operates within cofactor biosynthesis; 7,8-dihydroneopterin triphosphate biosynthesis; 7,8-dihydroneopterin triphosphate from GTP: step 1/1. The sequence is that of GTP cyclohydrolase 1 from Methylococcus capsulatus (strain ATCC 33009 / NCIMB 11132 / Bath).